Consider the following 217-residue polypeptide: Protein 33K (217 aa).

The segment at 1–142 (MPPKGNKQAI…KEKTSAIATR (142 aa)) is disordered. Acidic residues predominate over residues 24–68 (QWDEEEESWDDSQAEEVSDEEEMESWESLDEELEDKPPKDEEEEI). Low complexity predominate over residues 69 to 78 (IASAAAPSSK). Over residues 123-136 (KRSEKTTRPRKEKT) the composition is skewed to basic and acidic residues. The segment at 160–187 (YAIFQQSRGQQLELKVKNRSLRSLTRSC) is necessary for nuclear subcellular location. The segment at 166–186 (SRGQQLELKVKNRSLRSLTRS) is RS-repeat; required for splicing enhancer activity.

This sequence belongs to the adenoviridae splicing factor family. As to quaternary structure, homooligomer. Interacts with DBP; this interaction occurs at a unique vertex during genome packaging. Interacts with IVa2; this interaction occurs at a unique vertex during genome packaging and seems to potentiate IVa2 and 33K oligomerization. In terms of processing, phosphorylated in vitro by human PKA and PRKDC. PRKDC inhibits, whereas PKA activates the splicing factor.

Its subcellular location is the host nucleus. In terms of biological role, promotes alternative splicing of late transcripts by promoting splicing at weak 3' splice sites. Required for the temporal activation of major late pre-mRNA splicing at late times of infection. Induces the splicing and expression of the late capsid vertex protein. Functionally, probably functions as the small terminase that is part of the molecular motor that translocates genomic DNA in empty capsid during DNA packaging. This motor is located at a unique vertex and comprises at least the IVa2 ATPase, the small terminase 33K and probably a portal. Forms a ring-like structure of about 17 nm in which genomic DNA is translocated into the capsid. Stimulates IVa2 ATPase activity in the presence of the viral genome. Once the DNA is packaged, the terminase detaches: the 33K protein is present in the empty particles, but not in the mature virions. Also involved in virion assembly. This is Protein 33K from Human adenovirus F serotype 41 (HAdV-41).